Reading from the N-terminus, the 98-residue chain is MKINQLAVASTLESGDVMIRIAPLDTQDIDLQINSSIEKQFGEAIRATILEVLSRYDVRGVQLNVDDKGALDCILRARLETLLARASGIAALPWEDRQ.

Position 14 is an O-(phosphoribosyl dephospho-coenzyme A)serine (Ser14).

Belongs to the CitD family. As to quaternary structure, oligomer with a subunit composition of (alpha,beta,gamma)6.

Its subcellular location is the cytoplasm. In terms of biological role, covalent carrier of the coenzyme of citrate lyase. This Salmonella paratyphi A (strain ATCC 9150 / SARB42) protein is Citrate lyase acyl carrier protein 1.